We begin with the raw amino-acid sequence, 311 residues long: DNA-directed RNA polymerase subunit alpha (311 aa).

The interval 1 to 227 is alpha N-terminal domain (alpha-NTD); that stretch reads MAQFQIECVE…NLFCSLRNLD (227 aa). Residues 242–311 are alpha C-terminal domain (alpha-CTD); the sequence is ISQVLIEELQ…GISLPKEKTD (70 aa).

This sequence belongs to the RNA polymerase alpha chain family. In terms of assembly, in plastids the minimal PEP RNA polymerase catalytic core is composed of four subunits: alpha, beta, beta', and beta''. When a (nuclear-encoded) sigma factor is associated with the core the holoenzyme is formed, which can initiate transcription.

The protein resides in the plastid. It is found in the chloroplast. It catalyses the reaction RNA(n) + a ribonucleoside 5'-triphosphate = RNA(n+1) + diphosphate. Its function is as follows. DNA-dependent RNA polymerase catalyzes the transcription of DNA into RNA using the four ribonucleoside triphosphates as substrates. This chain is DNA-directed RNA polymerase subunit alpha, found in Porphyra purpurea (Red seaweed).